The following is a 569-amino-acid chain: Rab GTPase-binding effector protein 2 (569 aa).

3 disordered regions span residues 1–38, 181–267, and 388–414; these read MAAA…AELG, QRRP…ASLV, and RAEQ…PSSV. Residue A2 is modified to N-acetylalanine. A compositionally biased stretch (low complexity) spans 29–38; it reads EGANGEAELG. Residues 34–184 are a coiled coil; the sequence is EAELGELSRL…ELIQEIQRRP (151 aa). Residues S189, S193, S200, and S204 each carry the phosphoserine modification. The span at 245–257 shows a compositional bias: low complexity; it reads SSSSLPRSRQGLS. Residues 292–391 adopt a coiled-coil conformation; the sequence is WEQLQMEGRQ…EENQGLRAEQ (100 aa). The segment covering 393–403 has biased composition (low complexity); it reads PSSAPQGPQQE. The stretch at 423–523 forms a coiled coil; that stretch reads RTRQEARAQL…LQAELETSEQ (101 aa).

This sequence belongs to the rabaptin family. Heterodimer with RABGEF1. The dimer binds RAB5A that has been activated by GTP-binding. Interacts with SDCCAG8; this interaction is important for ciliogenesis regulation. Interacts with RAB4; this interaction may mediate VEGFR2 cell surface expression.

It localises to the cytoplasm. The protein localises to the early endosome. The protein resides in the cytoskeleton. It is found in the microtubule organizing center. Its subcellular location is the centrosome. It localises to the cilium basal body. Functionally, plays a role in membrane trafficking and in homotypic early endosome fusion. Participates in arteriogenesis by regulating vascular endothelial growth factor receptor 2/VEGFR2 cell surface expression and endosomal trafficking. By interacting with SDCCAG8, localizes to centrosomes and plays a critical role in ciliogenesis. The chain is Rab GTPase-binding effector protein 2 (RABEP2) from Pongo abelii (Sumatran orangutan).